The chain runs to 141 residues: Hemoglobin subunit alpha (141 aa).

The Globin domain occupies 1–141 (VLSPADKTNV…VSTVLTSKYR (141 aa)). The residue at position 3 (S3) is a Phosphoserine. An N6-succinyllysine modification is found at K7. The residue at position 8 (T8) is a Phosphothreonine. Position 11 is an N6-succinyllysine (K11). K16 is subject to N6-acetyllysine; alternate. The residue at position 16 (K16) is an N6-succinyllysine; alternate. Y24 bears the Phosphotyrosine mark. At S35 the chain carries Phosphoserine. At K40 the chain carries N6-succinyllysine. S49 carries the phosphoserine modification. O2 is bound at residue H58. Position 87 (H87) interacts with heme b. S102 carries the post-translational modification Phosphoserine. The residue at position 108 (T108) is a Phosphothreonine. Phosphoserine is present on residues S124 and S131. A phosphothreonine mark is found at T134 and T137. S138 is subject to Phosphoserine.

Belongs to the globin family. As to quaternary structure, heterotetramer of two alpha chains and two beta chains. As to expression, red blood cells.

Involved in oxygen transport from the lung to the various peripheral tissues. Functionally, hemopressin acts as an antagonist peptide of the cannabinoid receptor CNR1. Hemopressin-binding efficiently blocks cannabinoid receptor CNR1 and subsequent signaling. This chain is Hemoglobin subunit alpha (HBA), found in Loris tardigradus (Slender loris).